A 776-amino-acid chain; its full sequence is General transcription and DNA repair factor IIH helicase subunit XPD (776 aa).

The Helicase ATP-binding domain maps to 7 to 277 (DLLVYFPYSY…KKVDEKRLKD (271 aa)). An ATP-binding site is contributed by 42 to 49 (MPSGTGKT). The [4Fe-4S] cluster site is built by Cys115, Cys133, Cys150, and Cys184. The DEAH box signature appears at 228–231 (DEAH). The segment at 736-776 (HVEKQSTSKPPQQQNSAINSTITTSTTTTTTTSTISETHLT) is disordered. The segment covering 742-754 (TSKPPQQQNSAIN) has biased composition (polar residues). Low complexity predominate over residues 755–776 (STITTSTTTTTTTSTISETHLT).

It belongs to the helicase family. RAD3/XPD subfamily. As to quaternary structure, component of the 7-subunit TFIIH core complex composed of XPB/repB, XPD/repD, gtf2h1, gtf2h2, gtf2h3, gtf2h4 and gtf2h5, which is active in NER. The core complex associates with the 3-subunit CDK-activating kinase (CAK) module composed of cycH/cyclin H, cdk7 and mnat1 to form the 10-subunit holoenzyme (holo-TFIIH) active in transcription. Requires Mg(2+) as cofactor. [4Fe-4S] cluster serves as cofactor.

The protein resides in the nucleus. The enzyme catalyses Couples ATP hydrolysis with the unwinding of duplex DNA at the replication fork by translocating in the 5'-3' direction. This creates two antiparallel DNA single strands (ssDNA). The leading ssDNA polymer is the template for DNA polymerase III holoenzyme which synthesizes a continuous strand.. The catalysed reaction is ATP + H2O = ADP + phosphate + H(+). ATP-dependent 5'-3' DNA helicase, component of the general transcription and DNA repair factor IIH (TFIIH) core complex, which is involved in general and transcription-coupled nucleotide excision repair (NER) of damaged DNA and, when complexed to CDK-activating kinase (CAK), in transcription by RNA polymerase II. In NER, TFIIH acts by opening DNA around the lesion to allow the excision of the damaged oligonucleotide and its replacement by a new DNA fragment. The ATP-dependent helicase activity of XPD/repD is required for DNA opening. In transcription, TFIIH has an essential role in transcription initiation. When the pre-initiation complex (PIC) has been established, TFIIH is required for promoter opening and promoter escape. Phosphorylation of the C-terminal tail (CTD) of the largest subunit of RNA polymerase II by the kinase module CAK controls the initiation of transcription. XPD/repD acts by forming a bridge between CAK and the core-TFIIH complex. The sequence is that of General transcription and DNA repair factor IIH helicase subunit XPD from Dictyostelium discoideum (Social amoeba).